We begin with the raw amino-acid sequence, 486 residues long: Ribulose bisphosphate carboxylase large chain 3 (486 aa).

The substrate site is built by Asn-125 and Thr-175. The active-site Proton acceptor is Lys-177. Substrate is bound at residue Lys-179. Mg(2+) contacts are provided by Lys-203, Asp-205, and Glu-206. Position 203 is an N6-carboxylysine (Lys-203). His-295 functions as the Proton acceptor in the catalytic mechanism. Residues Arg-296, His-328, and Ser-380 each contribute to the substrate site.

It belongs to the RuBisCO large chain family. Type I subfamily. As to quaternary structure, heterohexadecamer of 8 large chains and 8 small chains. Mg(2+) serves as cofactor.

It carries out the reaction 2 (2R)-3-phosphoglycerate + 2 H(+) = D-ribulose 1,5-bisphosphate + CO2 + H2O. It catalyses the reaction D-ribulose 1,5-bisphosphate + O2 = 2-phosphoglycolate + (2R)-3-phosphoglycerate + 2 H(+). Functionally, ruBisCO catalyzes two reactions: the carboxylation of D-ribulose 1,5-bisphosphate, the primary event in carbon dioxide fixation, as well as the oxidative fragmentation of the pentose substrate. Both reactions occur simultaneously and in competition at the same active site. This is Ribulose bisphosphate carboxylase large chain 3 from Bradyrhizobium sp. (strain BTAi1 / ATCC BAA-1182).